Reading from the N-terminus, the 802-residue chain is Cullin-4 (802 aa).

Low complexity-rich tracts occupy residues 1 to 33 and 656 to 676; these read MNFN…NNNN and STSS…ASGS. Disordered regions lie at residues 1-43 and 656-686; these read MNFN…SLAG and STSS…GGAT. Residues 734 to 794 form the Cullin neddylation domain; that stretch reads DRQYQVDAAI…KEYLCRDPEN (61 aa). A Glycyl lysine isopeptide (Lys-Gly) (interchain with G-Cter in NEDD8) cross-link involves residue Lys748.

It belongs to the cullin family. Neddylated. Deneddylated via its interaction with the COP9 signalosome (CSN) complex.

It functions in the pathway protein modification; protein ubiquitination. Its function is as follows. Probable core component of cullin-based SCF-like E3 ubiquitin-protein ligase complexes which mediate the ubiquitination and subsequent proteasomal degradation of target proteins. The E3 ubiquitin-protein ligase activity of the complex is dependent on the neddylation of the cullin subunit. The sequence is that of Cullin-4 (culD) from Dictyostelium discoideum (Social amoeba).